A 165-amino-acid polypeptide reads, in one-letter code: Neurotrophin-3 (165 aa).

An N-terminal signal peptide occupies residues 1–3 (IQS). Residues 4 to 119 (TSMDQGSLSE…VLNQTSRRKR (116 aa)) constitute a propeptide that is removed on maturation. The N-linked (GlcNAc...) asparagine glycan is linked to Asn-112.

It belongs to the NGF-beta family.

Its subcellular location is the secreted. Seems to promote the survival of visceral and proprioceptive sensory neurons. The protein is Neurotrophin-3 (NTF3) of Aspidites melanocephalus (Black-headed python).